A 352-amino-acid chain; its full sequence is DNA polymerase IV (352 aa).

The UmuC domain maps to I4 to G185. Positions 8 and 103 each coordinate Mg(2+). Residue E104 is part of the active site.

It belongs to the DNA polymerase type-Y family. Monomer. The cofactor is Mg(2+).

Its subcellular location is the cytoplasm. The catalysed reaction is DNA(n) + a 2'-deoxyribonucleoside 5'-triphosphate = DNA(n+1) + diphosphate. Its function is as follows. Poorly processive, error-prone DNA polymerase involved in untargeted mutagenesis. Copies undamaged DNA at stalled replication forks, which arise in vivo from mismatched or misaligned primer ends. These misaligned primers can be extended by PolIV. Exhibits no 3'-5' exonuclease (proofreading) activity. May be involved in translesional synthesis, in conjunction with the beta clamp from PolIII. The protein is DNA polymerase IV of Yersinia enterocolitica serotype O:8 / biotype 1B (strain NCTC 13174 / 8081).